The sequence spans 768 residues: Ral guanine nucleotide dissociation stimulator-like 1 (768 aa).

The N-terminal Ras-GEF domain occupies Lys-65–Gln-196. Residues Ser-232–Ala-501 form the Ras-GEF domain. Phosphoserine is present on Ser-520. The disordered stretch occupies residues Pro-530 to Ile-623. 2 stretches are compositionally biased toward low complexity: residues Ser-541–Ser-561 and Glu-586–Ser-596. The span at Met-597 to Pro-621 shows a compositional bias: polar residues. Residues Asp-648–Ser-735 enclose the Ras-associating domain.

As to quaternary structure, interacts with Ras.

Functionally, probable guanine nucleotide exchange factor. In Mus musculus (Mouse), this protein is Ral guanine nucleotide dissociation stimulator-like 1 (Rgl1).